A 376-amino-acid polypeptide reads, in one-letter code: 26S proteasome non-ATPase regulatory subunit 13 (376 aa).

The region spanning 171–338 (SYYKDALRFL…KRVHMTWVQP (168 aa)) is the PCI domain. An N6-acetyllysine modification is found at K298.

It belongs to the proteasome subunit S11 family. As to quaternary structure, component of the 19S proteasome regulatory particle complex. The 26S proteasome consists of a 20S core particle (CP) and two 19S regulatory subunits (RP). The regulatory particle is made of a lid composed of 9 subunits including PSMD13, a base containing 6 ATPases and few additional components.

Its function is as follows. Component of the 26S proteasome, a multiprotein complex involved in the ATP-dependent degradation of ubiquitinated proteins. This complex plays a key role in the maintenance of protein homeostasis by removing misfolded or damaged proteins, which could impair cellular functions, and by removing proteins whose functions are no longer required. Therefore, the proteasome participates in numerous cellular processes, including cell cycle progression, apoptosis, or DNA damage repair. This is 26S proteasome non-ATPase regulatory subunit 13 from Rattus norvegicus (Rat).